Reading from the N-terminus, the 283-residue chain is BTB/POZ domain-containing protein KCTD15 (283 aa).

Residues 1–33 are disordered; it reads MPHRKERPSGSSLNAHGSSGTAEGGNMSRLSLT. The segment covering 9-21 has biased composition (polar residues); it reads SGSSLNAHGSSGT. Residues Ser31, Ser35, and Ser38 each carry the phosphoserine modification. The region spanning 56–126 is the BTB domain; the sequence is APVHIDVGGH…LRTSKLLLPD (71 aa).

As to quaternary structure, forms oligomers, predominantly homopentamers. Interacts with KCTD1, probably forming heteropentamers depending on its abundance in a cell-type dependent manner. Interacts with TFAP2A; this interaction inhibits TFAP2A transcriptional activation. In terms of tissue distribution, expressed in the cerebral cortex, cerebellum, and hypothalamus (at protein level). Expressed in the arcuate hypothalamic nucleus, the ventromedial hypothalamic nucleus and the accumbens nucleus of the ventral striatum.

Its subcellular location is the nucleus. Functionally, during embryonic development, interferes with neural crest formation. Inhibits AP2 transcriptional activity by interaction with its activation domain. This chain is BTB/POZ domain-containing protein KCTD15 (Kctd15), found in Mus musculus (Mouse).